Reading from the N-terminus, the 495-residue chain is Protein FAM83F (495 aa).

An N-acetylalanine modification is found at Ala2. The interval 2 to 294 (AESQLSCLDE…LYAISEEVNL (293 aa)) is DUF1669. Residue Ser4 is modified to Phosphoserine. 2 disordered regions span residues 341 to 362 (QQRE…GESA) and 384 to 495 (PISP…CVIS). The segment covering 447–458 (PAVPSSMASSPS) has biased composition (low complexity). Ser477 is modified (phosphoserine).

This sequence belongs to the FAM83 family. Directly interacts (via DUF1669) with CSNK1A1 and CSNK1A1L.

The protein localises to the cell membrane. The chain is Protein FAM83F (Fam83f) from Mus musculus (Mouse).